The sequence spans 243 residues: Ubiquinone/menaquinone biosynthesis C-methyltransferase UbiE (243 aa).

S-adenosyl-L-methionine contacts are provided by residues T69, D90, and 116–117 (DA).

This sequence belongs to the class I-like SAM-binding methyltransferase superfamily. MenG/UbiE family.

It carries out the reaction a 2-demethylmenaquinol + S-adenosyl-L-methionine = a menaquinol + S-adenosyl-L-homocysteine + H(+). The catalysed reaction is a 2-methoxy-6-(all-trans-polyprenyl)benzene-1,4-diol + S-adenosyl-L-methionine = a 5-methoxy-2-methyl-3-(all-trans-polyprenyl)benzene-1,4-diol + S-adenosyl-L-homocysteine + H(+). It participates in quinol/quinone metabolism; menaquinone biosynthesis; menaquinol from 1,4-dihydroxy-2-naphthoate: step 2/2. It functions in the pathway cofactor biosynthesis; ubiquinone biosynthesis. Its function is as follows. Methyltransferase required for the conversion of demethylmenaquinol (DMKH2) to menaquinol (MKH2) and the conversion of 2-polyprenyl-6-methoxy-1,4-benzoquinol (DDMQH2) to 2-polyprenyl-3-methyl-6-methoxy-1,4-benzoquinol (DMQH2). In Cupriavidus necator (strain ATCC 17699 / DSM 428 / KCTC 22496 / NCIMB 10442 / H16 / Stanier 337) (Ralstonia eutropha), this protein is Ubiquinone/menaquinone biosynthesis C-methyltransferase UbiE.